A 145-amino-acid polypeptide reads, in one-letter code: MQYLHCCLQIAPNQEGMVQAGGQGHGLARVVLRAVLSPPCWAPHSPCGSPAATEAGRLMRRLPSVGGRMTAPKTPRFLTRRPPASSPEDPPLPHPKTPRFLTQRPPASLPRRPRFLTLGPVSSHSSGDLRLWTAHQLPQQGGCPG.

Residues 62 to 145 form a disordered region; that stretch reads LPSVGGRMTA…QLPQQGGCPG (84 aa). Over residues 84-95 the composition is skewed to pro residues; that stretch reads ASSPEDPPLPHP.

This is an uncharacterized protein from Homo sapiens (Human).